The following is an 87-amino-acid chain: Defensin-like protein 176 (87 aa).

Positions 1-23 (MAKATSSLVVPIIFLVIFALVEQ) are cleaved as a signal peptide. 4 disulfides stabilise this stretch: Cys27–Cys66, Cys36–Cys55, Cys39–Cys60, and Cys43–Cys62.

It belongs to the DEFL family.

It localises to the secreted. In Arabidopsis thaliana (Mouse-ear cress), this protein is Defensin-like protein 176 (LCR65).